Here is a 303-residue protein sequence, read N- to C-terminus: MDALELKNIISDGLLSFPVTDFDQNGDFNKSSYAKRLEWLAPYGASALFAAGGTGEFFSLTGNEYSEVIKTAVDICKGSVPIIAGAGGPTRQAIEQAKEAERLGAHGILLMPHYLTEASQEGLIEHVKQVCNSVDFGVIFYNRSVSRLNLDSIQKLTEMCPNLIGFKDSSGQIDMMTAVTQTIGDRLSYLGGLPTAEVFAAPYKALGCPVYSSAVFNFIPKTAMEFYNALRSDDFETTNRLIKDFFLPLIKIRDRKSGYAVSMIKAGAKIVGHDAGPVRPPLSDLTQADYEDLAALIATLGPQ.

The protein belongs to the DapA family.

It carries out the reaction 5-dehydro-4-deoxy-D-glucarate + H(+) = 2,5-dioxopentanoate + CO2 + H2O. Its pathway is carbohydrate acid metabolism; D-glucarate degradation; 2,5-dioxopentanoate from D-glucarate: step 2/2. This chain is Probable 5-dehydro-4-deoxyglucarate dehydratase, found in Acinetobacter baumannii (strain SDF).